The sequence spans 1586 residues: Zinc finger protein GLI2 (1586 aa).

A compositionally biased stretch (polar residues) spans 1 to 10 (METSASATAS). A disordered region spans residues 1-22 (METSASATASEKQEAKSGILEA). Val-50 is covalently cross-linked (Glycyl lysine isopeptide (Lys-Gly) (interchain with G-Cter in SUMO2)). A phosphoserine mark is found at Ser-149, Ser-234, Ser-236, and Ser-242. Polar residues predominate over residues 342–367 (SSSSNCLSDTNQNKQSSESAVSSTVN). Positions 342–389 (SSSSNCLSDTNQNKQSSESAVSSTVNPVAIHKRSKVKTEPEGLRPASP) are disordered. At Ser-388 the chain carries Phosphoserine; by DYRK2. A C2H2-type 1 zinc finger spans residues 437-464 (TNCHWEDCTKEYDTQEQLVHHINNEHIH). Residues 475–497 (QACTREQKPFKAQYMLVVHMRRH) form a C2H2-type 2; degenerate zinc finger. 3 C2H2-type zinc fingers span residues 503–527 (HKCT…LRSH), 533–558 (YVCE…NRTH), and 564–589 (YICK…KTVH). Disordered stretches follow at residues 577-636 (DPSS…TSQA) and 650-716 (SSGL…SAGG). Positions 589-605 (HGPDAHVTKKQRNDVHL) are enriched in basic and acidic residues. Positions 654–674 (CQSSPGAQSSCSSEPSPLGSA) are enriched in low complexity. Phosphothreonine is present on Thr-725. Disordered stretches follow at residues 742–879 (DSCS…SGLL), 925–1030 (RTLP…RPPS), 1182–1215 (QYPG…PSQG), 1421–1441 (MGNM…GAPD), and 1469–1498 (MRSQ…QVSS). N6-acetyllysine; by EP300 is present on Lys-757. The segment covering 791–802 (LSASEVTMLSQL) has biased composition (polar residues). Composition is skewed to low complexity over residues 809 to 824 (STST…RRSS) and 947 to 961 (GHGH…PHEA). Basic and acidic residues predominate over residues 968–977 (RASDPVRRPD). Phosphoserine; by DYRK2 is present on Ser-1011. Over residues 1469–1485 (MRSQPPQPQACQDSIQP) the composition is skewed to polar residues.

The protein belongs to the GLI C2H2-type zinc-finger protein family. As to quaternary structure, interaction with ZIC1 and ZIC2. Interacts with STK36. Interacts with SUFU; this inhibits transcriptional activation mediated by GLI2. Interacts (via C-terminal internal region) with FOXC1 (via N-terminus); this interaction is direct and increases GLI2 DNA-binding and transcriptional activity through a smoothened (SMO)-independent Hedgehog (Hh) signaling pathway. Phosphorylated in vitro by ULK3. Phosphorylated by DYRK2; this inhibits GLI2 transcription factor activity and promotes proteasomal degradation of GLI2. In terms of processing, acetylation at Lys-757 inhibits Hh target gene expression, probably by impeding entry into chromatin thus preventing promoter occupancy. In terms of tissue distribution, expressed in breast cancers (at protein level). Isoform 1 and isoform 4 are expressed in HTLV-1-infected T-cell lines (at protein level). Isoform 1 and isoform 2 are strongly expressed in HTLV-1-infected T-cell lines. Isoform 3 and isoform 4 are weakly expressed in HTLV-1-infected T-cell lines.

Its subcellular location is the nucleus. The protein resides in the cytoplasm. The protein localises to the cell projection. It localises to the cilium. Functionally, functions as a transcription regulator in the hedgehog (Hh) pathway. Functions as a transcriptional activator. May also function as transcriptional repressor. Requires STK36 for full transcriptional activator activity. Required for normal embryonic development. Its function is as follows. Involved in the smoothened (SHH) signaling pathway. Acts as a transcriptional activator in T-cell leukemia virus type 1 (HTLV-1)-infected cells in a Tax-dependent manner. Binds to the DNA sequence 5'-GAACCACCCA-3' which is part of the Tax-responsive element (TRE-2S) regulatory element that augments the Tax-dependent enhancer of HTLV-1. In terms of biological role, (Microbial infection) Acts as a transcriptional activators in T-cell leukemia virus type 1 (HTLV-1)-infected cells in a Tax-dependent manner. Binds to the DNA sequence 5'-GAACCACCCA-3' which is part of the Tax-responsive element (TRE-2S) regulatory element that augments the Tax-dependent enhancer of HTLV-1. Functionally, acts as a transcriptional repressor. In Homo sapiens (Human), this protein is Zinc finger protein GLI2.